Consider the following 240-residue polypeptide: 1-(5-phosphoribosyl)-5-[(5-phosphoribosylamino)methylideneamino] imidazole-4-carboxamide isomerase (240 aa).

Asp-9 functions as the Proton acceptor in the catalytic mechanism. Asp-131 functions as the Proton donor in the catalytic mechanism.

Belongs to the HisA/HisF family.

Its subcellular location is the cytoplasm. It carries out the reaction 1-(5-phospho-beta-D-ribosyl)-5-[(5-phospho-beta-D-ribosylamino)methylideneamino]imidazole-4-carboxamide = 5-[(5-phospho-1-deoxy-D-ribulos-1-ylimino)methylamino]-1-(5-phospho-beta-D-ribosyl)imidazole-4-carboxamide. It participates in amino-acid biosynthesis; L-histidine biosynthesis; L-histidine from 5-phospho-alpha-D-ribose 1-diphosphate: step 4/9. This Azobacteroides pseudotrichonymphae genomovar. CFP2 protein is 1-(5-phosphoribosyl)-5-[(5-phosphoribosylamino)methylideneamino] imidazole-4-carboxamide isomerase.